A 424-amino-acid chain; its full sequence is Serine--tRNA ligase (424 aa).

230-232 (TAE) contributes to the L-serine binding site. An ATP-binding site is contributed by 261 to 263 (RSE). E284 serves as a coordination point for L-serine. 348–351 (EISS) is an ATP binding site. S384 contacts L-serine.

Belongs to the class-II aminoacyl-tRNA synthetase family. Type-1 seryl-tRNA synthetase subfamily. As to quaternary structure, homodimer. The tRNA molecule binds across the dimer.

It localises to the cytoplasm. It carries out the reaction tRNA(Ser) + L-serine + ATP = L-seryl-tRNA(Ser) + AMP + diphosphate + H(+). The catalysed reaction is tRNA(Sec) + L-serine + ATP = L-seryl-tRNA(Sec) + AMP + diphosphate + H(+). The protein operates within aminoacyl-tRNA biosynthesis; selenocysteinyl-tRNA(Sec) biosynthesis; L-seryl-tRNA(Sec) from L-serine and tRNA(Sec): step 1/1. Functionally, catalyzes the attachment of serine to tRNA(Ser). Is also able to aminoacylate tRNA(Sec) with serine, to form the misacylated tRNA L-seryl-tRNA(Sec), which will be further converted into selenocysteinyl-tRNA(Sec). This Streptococcus pneumoniae (strain ATCC 700669 / Spain 23F-1) protein is Serine--tRNA ligase.